A 125-amino-acid chain; its full sequence is MPTLNQLIRHGREEKRRTDRTRALDKCPQKLGACPRVSTRTPKKPNSAPRKIAKVRLSNRHDIFAHIPGEGHNSQEHSQVLIRGGRVKDSPGVKSHCIRGVKDLMGIPGRRSGRSKYGAEKPKSI.

2 disordered regions span residues 1-23 (MPTLNQLIRHGREEKRRTDRTRA) and 104-125 (LMGIPGRRSGRSKYGAEKPKSI). Residues 10-23 (HGREEKRRTDRTRA) show a composition bias toward basic and acidic residues.

Belongs to the universal ribosomal protein uS12 family.

The protein resides in the mitochondrion. Its function is as follows. Protein S12 is involved in the translation initiation step. The chain is Small ribosomal subunit protein uS12m (RPS12) from Raphanus sativus (Radish).